The sequence spans 455 residues: Putative RNA polymerase II subunit B1 CTD phosphatase rpap-2 (455 aa).

The RTR1-type zinc finger occupies 36-121; sequence EHLPHLHCLG…LDEHPLWITG (86 aa). Positions 59, 64, 97, and 101 each coordinate Zn(2+).

Belongs to the RPAP2 family.

It localises to the nucleus. It carries out the reaction O-phospho-L-seryl-[protein] + H2O = L-seryl-[protein] + phosphate. The catalysed reaction is O-phospho-L-threonyl-[protein] + H2O = L-threonyl-[protein] + phosphate. Functionally, putative RNA polymerase II subunit B1 C-terminal domain (CTD) phosphatase involved in RNA polymerase II transcription regulation. This chain is Putative RNA polymerase II subunit B1 CTD phosphatase rpap-2, found in Caenorhabditis elegans.